Consider the following 668-residue polypeptide: Echinocandin B biosynthetic cluster protein J (668 aa).

Disordered stretches follow at residues 1–20 (MHFA…DQSL), 92–113 (YTPP…PPTP), 224–322 (PLDH…QSAD), 330–349 (EVAE…SIPT), and 483–506 (NCSS…PPLK). The span at 96-106 (SLDSRSSATPP) shows a compositional bias: polar residues. Residues 264-275 (NPEPGTPTPPSP) are compositionally biased toward pro residues. The segment covering 311–322 (YRSTPSPCQSAD) has biased composition (polar residues). Residues 484 to 494 (CSSSSCSSSAS) are compositionally biased toward low complexity. Residues 495 to 505 (KKNEEKREPPL) are compositionally biased toward basic and acidic residues.

The protein operates within antifungal biosynthesis. Functionally, part of the gene cluster that mediates the biosynthesis of echinocandin B, a fungal lipidated cyclic hexapeptide that acts as an antifungal agent. Linoleoyl-AMP, produced by the fatty-acyl-AMP ligase ecdI, is transferred to the initiation carrier domain (T0) of ecdA. The linoleoyl-S-phosphopantetheinyl-T0 is sequentially extended with L-ornithine, L-threonine, L-proline, L-homotyrosine, L-threonine, and 4R-methyl-L-proline to form the linear hexapeptide. Thereafter, the terminal condensation (C7) performs macrocyclization of the NRPS product and the cyclic scaffold is released from ecdA. All six of the amino acid residues are hydroxylated, including 4R,5R-dihydroxy-L-ornithine, 4R-hydroxyl-L-proline, 3S,4S-dihydroxy-L-homotyrosine, and 3S-hydroxyl-4S-methyl-L-prolin. In the pathway, all the hydroxylation reactions are proposed to occur following completion of the cyclic peptide, so the unhydroxylated precursor produced by ecdA will undergo six rounds of hydroxylation. Five hydroxylase genes (ecdG, ecdH, ecdK, htyE and htyF) are embedded within the echinocandin B (ecd) and L-homotyrosine (hty) clusters. The polypeptide is Echinocandin B biosynthetic cluster protein J (Aspergillus rugulosus (Emericella rugulosa)).